An 888-amino-acid chain; its full sequence is Leucine--tRNA ligase (888 aa).

The 'HIGH' region signature appears at 42-52; that stretch reads PYPSGKLHMGH. Positions 640-644 match the 'KMSKS' region motif; that stretch reads TMSKS. Lys643 lines the ATP pocket.

This sequence belongs to the class-I aminoacyl-tRNA synthetase family.

It is found in the cytoplasm. The enzyme catalyses tRNA(Leu) + L-leucine + ATP = L-leucyl-tRNA(Leu) + AMP + diphosphate. This chain is Leucine--tRNA ligase, found in Polaromonas naphthalenivorans (strain CJ2).